The following is a 970-amino-acid chain: Translation initiation factor IF-2 (970 aa).

2 disordered regions span residues 54–270 and 328–348; these read KILA…TATQ and DKRR…KSLS. Over residues 87–96 the composition is skewed to low complexity; the sequence is QEAQPVEAQP. Polar residues predominate over residues 98–112; sequence YEEQPSYEEQPSYEE. Low complexity predominate over residues 121–149; it reads EVAAEAAPEPVEEPASSPEGGAPAGGAEP. 2 stretches are compositionally biased toward pro residues: residues 150–160 and 168–182; these read QPAPEAPPPSA and PSAP…PAPS. The span at 183–253 shows a compositional bias: low complexity; sequence VPAGAQPPGA…PHGPGAQPGQ (71 aa). Positions 469–638 constitute a tr-type G domain; that stretch reads IRPPVVTVMG…ALQSEVLELK (170 aa). The segment at 478–485 is G1; it reads GHVDHGKT. 478-485 contacts GTP; it reads GHVDHGKT. The interval 503–507 is G2; sequence GITQH. A G3 region spans residues 524 to 527; the sequence is DTPG. GTP-binding positions include 524 to 528 and 578 to 581; these read DTPGH and NKID. The tract at residues 578-581 is G4; it reads NKID. The tract at residues 614 to 616 is G5; sequence SAR.

It belongs to the TRAFAC class translation factor GTPase superfamily. Classic translation factor GTPase family. IF-2 subfamily.

The protein localises to the cytoplasm. Functionally, one of the essential components for the initiation of protein synthesis. Protects formylmethionyl-tRNA from spontaneous hydrolysis and promotes its binding to the 30S ribosomal subunits. Also involved in the hydrolysis of GTP during the formation of the 70S ribosomal complex. The sequence is that of Translation initiation factor IF-2 from Anaeromyxobacter sp. (strain Fw109-5).